The primary structure comprises 216 residues: UPF0134 protein MPN_344 (216 aa).

The span at 47–62 shows a compositional bias: basic and acidic residues; it reads FTIIEDQQDRPDKPEE. Disordered regions lie at residues 47–104 and 194–216; these read FTII…PKPD and GKMD…LESK. The span at 68–78 shows a compositional bias: pro residues; it reads IPKPPKPPKGP. Residues 83 to 93 are compositionally biased toward low complexity; it reads EPGQPGGPDDP.

It belongs to the UPF0134 family.

The polypeptide is UPF0134 protein MPN_344 (Mycoplasma pneumoniae (strain ATCC 29342 / M129 / Subtype 1) (Mycoplasmoides pneumoniae)).